The chain runs to 445 residues: Chromosomal replication initiator protein DnaA (445 aa).

Residues 1–71 form a domain I, interacts with DnaA modulators region; it reads MEEVWLQAQS…SVQSLTDSQT (71 aa). Residues 71-108 form a domain II region; it reads TKIELLIAKPKTEKPKQPAASEVTAAEPEACSGPDHST. Residues 83-106 form a disordered region; the sequence is EKPKQPAASEVTAAEPEACSGPDH. The tract at residues 109-325 is domain III, AAA+ region; that stretch reads NLNPKYTFDT…GMLIRLGAVS (217 aa). ATP-binding residues include Gly153, Gly155, Lys156, and Thr157. The interval 326-445 is domain IV, binds dsDNA; that stretch reads SLTGKNITLD…VDTLRKGLLS (120 aa).

This sequence belongs to the DnaA family. In terms of assembly, oligomerizes as a right-handed, spiral filament on DNA at oriC.

It is found in the cytoplasm. Functionally, plays an essential role in the initiation and regulation of chromosomal replication. ATP-DnaA binds to the origin of replication (oriC) to initiate formation of the DNA replication initiation complex once per cell cycle. Binds the DnaA box (a 9 base pair repeat at the origin) and separates the double-stranded (ds)DNA. Forms a right-handed helical filament on oriC DNA; dsDNA binds to the exterior of the filament while single-stranded (ss)DNA is stabiized in the filament's interior. The ATP-DnaA-oriC complex binds and stabilizes one strand of the AT-rich DNA unwinding element (DUE), permitting loading of DNA polymerase. After initiation quickly degrades to an ADP-DnaA complex that is not apt for DNA replication. Binds acidic phospholipids. This is Chromosomal replication initiator protein DnaA from Geobacter sulfurreducens (strain ATCC 51573 / DSM 12127 / PCA).